A 426-amino-acid chain; its full sequence is Serine--tRNA ligase (426 aa).

An L-serine-binding site is contributed by 231-233; the sequence is TAE. 262 to 264 lines the ATP pocket; that stretch reads RSE. L-serine is bound at residue Glu285. 349 to 352 lines the ATP pocket; the sequence is EISS. Ser384 is an L-serine binding site.

This sequence belongs to the class-II aminoacyl-tRNA synthetase family. Type-1 seryl-tRNA synthetase subfamily. Homodimer. The tRNA molecule binds across the dimer.

Its subcellular location is the cytoplasm. It catalyses the reaction tRNA(Ser) + L-serine + ATP = L-seryl-tRNA(Ser) + AMP + diphosphate + H(+). The catalysed reaction is tRNA(Sec) + L-serine + ATP = L-seryl-tRNA(Sec) + AMP + diphosphate + H(+). It functions in the pathway aminoacyl-tRNA biosynthesis; selenocysteinyl-tRNA(Sec) biosynthesis; L-seryl-tRNA(Sec) from L-serine and tRNA(Sec): step 1/1. In terms of biological role, catalyzes the attachment of serine to tRNA(Ser). Is also able to aminoacylate tRNA(Sec) with serine, to form the misacylated tRNA L-seryl-tRNA(Sec), which will be further converted into selenocysteinyl-tRNA(Sec). This is Serine--tRNA ligase from Laribacter hongkongensis (strain HLHK9).